We begin with the raw amino-acid sequence, 2844 residues long: Sodium channel protein 60E (2844 aa).

Residues 1 to 121 (MSDDQATFND…WSPARRVCVY (121 aa)) are Cytoplasmic-facing. Residues 107 to 434 (FLFYPWSPAR…FDPSVLNVKK (328 aa)) form an I repeat. A helical membrane pass occupies residues 122 to 145 (IATNQFFDYCVMATILFNCIFLAM). Residues 146–151 (TETVEE) are Extracellular-facing. Residues 152–172 (AEYIFLAIYSIEMVIKIIAKG) form a helical membrane-spanning segment. Over 173-183 (FLLNKYTYLRN) the chain is Cytoplasmic. The chain crosses the membrane as a helical span at residues 184-202 (PWNWLDFVVITSGYATIGM). Residues 203–208 (EVGNLA) lie on the Extracellular side of the membrane. The chain crosses the membrane as a helical; Voltage-sensor span at residues 209–228 (GLRTFRVLRALKTVSIMPGL). Over 229 to 244 (KTIINALLHSFRQLAE) the chain is Cytoplasmic. Residues 245–265 (VMTLTIFCLMVFALFALQVYM) traverse the membrane as a helical segment. At 266–340 (GELRNKCVRQ…PNHGYTNFDN (75 aa)) the chain is on the extracellular side. Cysteine 272 and cysteine 318 are oxidised to a cystine. N-linked (GlcNAc...) asparagine glycosylation is found at asparagine 282, asparagine 293, and asparagine 311. The pore-forming intramembrane region spans 341-365 (FMWSMLTTFQLITLDYWENVYNMVL). Topologically, residues 366-374 (ATCGPMSVS) are extracellular. Residues 375–395 (FFTVVVFFGSFYLINLMLAVV) traverse the membrane as a helical segment. Topologically, residues 396 to 687 (ALSYEEEAEI…QNCLYKVVRD (292 aa)) are cytoplasmic. A disordered region spans residues 452-610 (ASYSKKKTRR…QDTTNDMGHV (159 aa)). The span at 455-465 (SKKKTRRKKTK) shows a compositional bias: basic residues. The segment covering 469–479 (EGGTNGNGNGS) has biased composition (gly residues). Low complexity-rich tracts occupy residues 511 to 520 (QAQKQYQQME) and 577 to 586 (SSNSSGVNRE). A compositionally biased stretch (acidic residues) spans 593–603 (GVVDDHEEQDT). One copy of the II repeat lies at 668 to 1130 (CTDYESWLQF…ESIELLGQYN (463 aa)). Residues 688-708 (PLFELAITLCIVLNTAFLAME) form a helical membrane-spanning segment. Over 709–718 (HHGMSESFRN) the chain is Extracellular. A helical membrane pass occupies residues 719 to 743 (ALDVGNKVFTSIFTFECIVKLMALS). The Cytoplasmic portion of the chain corresponds to 744–749 (KDFFLC). Residues 750 to 769 (GWNIFDLLIVTASLLDIIFE) traverse the membrane as a helical segment. Over 770–775 (LVDGLS) the chain is Extracellular. Residues 776–795 (VLRGLRLLRVLKLAQSWTTM) traverse the membrane as a helical; Voltage-sensor segment. The Cytoplasmic segment spans residues 796–810 (KVLLSIIISTIGALG). Residues 811–832 (NLTLILVIVIYIFAVIGMQLFS) traverse the membrane as a helical segment. The Extracellular segment spans residues 833 to 852 (KDYTPEKFDPDPVPRWNFND). The segment at residues 853 to 873 (FFHSFMMIFRILCGEWIEPLW) is an intramembrane region (pore-forming). Residues 874–889 (DCMRAEEEQGASTCFA) are Extracellular-facing. Cysteine 875 and cysteine 887 are oxidised to a cystine. Residues 890 to 910 (IFLPTLVMGNFMVLNLFLALL) form a helical membrane-spanning segment. Over 911–1742 (LNSFNSEELK…SAKHWTRVRT (832 aa)) the chain is Cytoplasmic. A compositionally biased stretch (polar residues) spans 1129 to 1157 (YNSTDTDPYANDQRSGCGSFNRGDSLQDN). 5 disordered regions span residues 1129–1166 (YNST…GSEE), 1185–1224 (YRKS…NSMS), 1268–1288 (ISNV…ENET), 1577–1630 (APTP…ADAS), and 1635–1654 (LAMA…ATQK). The segment covering 1191–1203 (RLSQSSGQSQRSL) has biased composition (low complexity). Residues 1204 to 1213 (LKSEEAEMRR) show a composition bias toward basic and acidic residues. 3 stretches are compositionally biased toward polar residues: residues 1277-1286 (PSSQMGQPEN), 1604-1618 (PQST…QSAR), and 1640-1654 (KTEQ…ATQK). Residues 1723–2040 (PWFMSCMDTQ…QKHYYTAMKK (318 aa)) form an III repeat. The helical transmembrane segment at 1743–1763 (AVLTVVDTPAFEWFVLVLIFA) threads the bilayer. At 1764–1789 (SSITLCFEDINLDKNKTLKRVLYWIN) the chain is on the extracellular side. 2 N-linked (GlcNAc...) asparagine glycosylation sites follow: asparagine 1778 and asparagine 1789. Residues 1790–1810 (FSFCLIFVVEMILKWLALGFS) form a helical membrane-spanning segment. The Cytoplasmic segment spans residues 1811–1813 (KYF). Residues 1814–1834 (TSFWTILDFIIVFVSVFSLLI) traverse the membrane as a helical segment. The Extracellular segment spans residues 1835-1839 (EENEN). The chain crosses the membrane as a helical; Voltage-sensor span at residues 1840–1861 (LKVLRSLRTLRALRPLRAISRW). Topologically, residues 1862-1880 (QGMRIVVNALMYAIPSIFN) are cytoplasmic. The chain crosses the membrane as a helical span at residues 1881-1902 (VLLVCLVFWLIFSIMGVQFFGG). Residues 1903–1943 (KFFKCVNEMGELLPITEVNDKWDCIEQNYTWINSKITFDHV) are Extracellular-facing. An N-linked (GlcNAc...) asparagine glycan is attached at asparagine 1930. The segment at residues 1944–1965 (GMGYLALLQVATFEGWMEVMAD) is an intramembrane region (pore-forming). The Extracellular portion of the chain corresponds to 1966–1981 (AVDARGVDLQPQREAN). A helical membrane pass occupies residues 1982 to 2002 (LYAYIYFVIFIVCGSFFTLNL). Over 2003–2069 (FIGVIIDNFN…MFYDLSNSRR (67 aa)) the chain is Cytoplasmic. The stretch at 2050–2311 (IKRPINHFLA…NMYIAIILEN (262 aa)) is one IV repeat. Residues 2070-2090 (FEIAIFVLIFLNMLTMGIEHY) traverse the membrane as a helical segment. Topologically, residues 2091–2095 (DQPHA) are extracellular. Residues 2096 to 2116 (VFFILEVSNAFFTTVFGLEAI) form a helical membrane-spanning segment. Over 2117–2132 (VKIVGLRYHYFTVPWN) the chain is Cytoplasmic. The chain crosses the membrane as a helical span at residues 2133–2153 (VFDFLLVLASIFGILMEDIMI). The Extracellular segment spans residues 2154-2162 (DLPISPTLL). Residues 2163–2184 (RVVRVFRIGRILRLIKAAKGIR) traverse the membrane as a helical; Voltage-sensor segment. At 2185 to 2199 (KLLFALVVSLPALFN) the chain is on the cytoplasmic side. Residues 2200–2220 (IGALLGLITFIYAILGMSLFG) form a helical membrane-spanning segment. Residues 2221-2236 (NVKLQGALDDMVNFQT) are Extracellular-facing. An intramembrane region (pore-forming) is located at residues 2237-2259 (FGRSMQLLFRLMTSAGWNDVLES). Residues 2260 to 2288 (LMIQPPDCDPFIHGHTNGNCGHPLLAITY) are Extracellular-facing. A helical membrane pass occupies residues 2289 to 2309 (FTSFIIISYMIVINMYIAIIL). The Cytoplasmic portion of the chain corresponds to 2310 to 2844 (ENFNQAHQEE…QFESLPDRQR (535 aa)). Positions 2441–2470 (QEKAAKTIQTGWKEYLRRKREKERSNSGDS) constitute an IQ domain. Disordered stretches follow at residues 2457-2479 (RRKR…SPGG), 2584-2668 (SLTS…LSAQ), 2780-2802 (DSPK…GAPI), and 2818-2844 (NPEK…DRQR). The span at 2467-2479 (SGDSATQTSSPGG) shows a compositional bias: polar residues. The span at 2595-2632 (AMNNTTNTTSNSASTSGTASSTATAPATGCGPAATSAS) shows a compositional bias: low complexity. Residues 2647–2658 (SRKRASSFIRKK) show a composition bias toward basic residues. The span at 2825 to 2836 (DQGNGQDETAQF) shows a compositional bias: polar residues.

It belongs to the sodium channel (TC 1.A.1.10) family. NaCP60E subfamily. In embryonic and larval stages, expression is limited to very few non-neuronal cells in either the CNS or PNS. In pupal and adult stages, expressed in cell bodies of the fly central nervous system, including optic lobes, central brain, subesophageal ganglion, thoracico-abdominal ganglion, major olfactory organs, the third antennal segment and the maxillary palps.

It localises to the cell membrane. In terms of biological role, mediates the voltage-dependent sodium ion permeability of excitable membranes. Plays a role in processing of olfactory information during the olfactory avoidance response. In Drosophila melanogaster (Fruit fly), this protein is Sodium channel protein 60E (NaCP60E).